Here is a 992-residue protein sequence, read N- to C-terminus: Meckelin (992 aa).

Residues 1 to 35 (MVMRTRPLAAMAVRSCFSALTGTVYLLLVLCEVSW) form the signal peptide. The Extracellular portion of the chain corresponds to 36–516 (AQIFSFPFQR…SVKYEMNQGD (481 aa)). Positions 37-280 (QIFSFPFQRP…FHYVFEGAAG (244 aa)) are cysteine-rich. 12 disulfides stabilise this stretch: cysteine 49–cysteine 62, cysteine 65–cysteine 78, cysteine 80–cysteine 97, cysteine 100–cysteine 114, cysteine 117–cysteine 127, cysteine 129–cysteine 150, cysteine 153–cysteine 170, cysteine 173–cysteine 184, cysteine 186–cysteine 197, cysteine 237–cysteine 246, cysteine 253–cysteine 268, and cysteine 354–cysteine 375. A glycan (N-linked (GlcNAc...) asparagine) is linked at asparagine 242. Residues 517 to 545 (AFVQTDIALGVLGGLAVLSSLLKTAGWKR) form a helical membrane-spanning segment. The Cytoplasmic portion of the chain corresponds to 546-555 (RIGSPMIDLQ). A helical transmembrane segment spans residues 556–587 (TVMKFLLYYAGDLANVFFIITVGTGLYWLIFF). At 588 to 600 (KAQKSVSVLLPMP) the chain is on the extracellular side. A helical transmembrane segment spans residues 601–628 (VQEERFVTYVGCAFAMKALQFLHKLISQ). The Cytoplasmic segment spans residues 629 to 667 (ITIDIFFIDWERPKGKVLKAVEGEGGVRSATVPVSIWRT). An intramembrane region (helical) is located at residues 668–676 (YFVANEWNE). The chain crosses the membrane as a discontinuously helical span at residues 668-698 (YFVANEWNEIQTVRKINPLFQVLTTLFFLEV). The stretch at 677 to 685 (IQTVRKINP) is an intramembrane region. The segment at residues 686 to 698 (LFQVLTTLFFLEV) is an intramembrane region (helical). Residues 699–728 (VGFKNLALMDPSSSLSRSLSDYAAPYSRIL) lie on the Extracellular side of the membrane. An intramembrane region (helical) is located at residues 729-754 (RYAVATTIWLVIGIVQVVFFAAFYER). A discontinuously helical transmembrane segment spans residues 729–768 (RYAVATTIWLVIGIVQVVFFAAFYERFIEDKIRQFVDLCS). An intramembrane segment occupies 755-759 (FIEDK). Positions 760–768 (IRQFVDLCS) form an intramembrane region, helical. Residues 769-923 (MSNVSVFLLS…SIFYNDESHS (155 aa)) lie on the Cytoplasmic side of the membrane. An intramembrane region (helical) is located at residues 924 to 926 (FSS). A discontinuously helical transmembrane segment spans residues 924-949 (FSSVLYYGNEATLLIFDLLFFCVVDL). An intramembrane segment occupies 927–933 (VLYYGNE). An intramembrane region (helical) is located at residues 934–949 (ATLLIFDLLFFCVVDL). Topologically, residues 950–954 (ACQNF) are extracellular. The chain crosses the membrane as a helical span at residues 955–982 (VLASFLTYLQQEIFRFIRNTVGQKNLAT). The Cytoplasmic segment spans residues 983-992 (KTLVDERFLI).

Homodimer. Part of the tectonic-like complex (also named B9 complex). Interacts with DNAJB9, DNAJC10 and mutated SFTPC. Interacts with SYNE2 during the early establishment of cell polarity. Interacts (via C-terminus) with FLNA. Interacts with TMEM218. Interacts with WNT5A. Interacts with ROR2.

The protein localises to the cell membrane. It is found in the endoplasmic reticulum membrane. Its subcellular location is the cytoplasm. The protein resides in the cytoskeleton. It localises to the cilium basal body. Part of the tectonic-like complex which is required for tissue-specific ciliogenesis and may regulate ciliary membrane composition. Involved in centrosome migration to the apical cell surface during early ciliogenesis. Required for ciliary structure and function, including a role in regulating length and appropriate number through modulating centrosome duplication. Is a key regulator of stereociliary bundle orientation. Required for epithelial cell branching morphology. Essential for endoplasmic reticulum-associated degradation (ERAD) of surfactant protein C (sftpc). Involved in the negative regulation of canonical Wnt signaling, and activation of the non-canonical cascade stimulated by WNT5A. In non-canonical Wnt signaling, it may act as ROR2 coreceptor. The protein is Meckelin (Tmem67) of Rattus norvegicus (Rat).